The following is a 152-amino-acid chain: Small ribosomal subunit protein bS6 (152 aa).

Positions 94–152 are disordered; sequence VKQEGPLPTPKPSNKSSTQSENKDNPETKVESKEEQSVTNSDTSTTKKDDNEIKENTES. Basic and acidic residues-rich tracts occupy residues 114-129 and 138-152; these read ENKD…KEEQ and TTKK…NTES.

It belongs to the bacterial ribosomal protein bS6 family.

Binds together with bS18 to 16S ribosomal RNA. The protein is Small ribosomal subunit protein bS6 of Prochlorococcus marinus (strain MIT 9312).